A 951-amino-acid polypeptide reads, in one-letter code: Plasma membrane ATPase (951 aa).

The next 4 membrane-spanning stretches (helical) occupy residues 61–81, 93–113, 243–263, and 277–297; these read FLGF…IMAI, WEDF…SFIE, IGNF…IVMF, and LLVL…SVTM. Catalysis depends on aspartate 329, which acts as the 4-aspartylphosphate intermediate. Mg(2+) is bound by residues aspartate 588 and aspartate 592. 6 helical membrane passes run 647–667, 671–691, 709–729, 752–772, 785–805, and 814–834; these read IYAV…ALIW, FSPF…MTIS, IFAT…IFFW, EMMS…IFVT, LLLV…AVYA, and GIGW…YFPL.

Belongs to the cation transport ATPase (P-type) (TC 3.A.3) family. Type IIIA subfamily.

It is found in the cell membrane. It catalyses the reaction ATP + H2O + H(+)(in) = ADP + phosphate + 2 H(+)(out). Its function is as follows. The plasma membrane ATPase of plants and fungi is a hydrogen ion pump. The proton gradient it generates drives the active transport of nutrients by H(+)-symport. The resulting external acidification and/or internal alkinization may mediate growth responses. The sequence is that of Plasma membrane ATPase from Oryza sativa subsp. japonica (Rice).